Reading from the N-terminus, the 855-residue chain is Mitochondrial 15S rRNA processing factor CCM1 (855 aa).

Residues proline 29–asparagine 61 form a disordered region. 3 PPR repeats span residues aspartate 234–leucine 265, asparagine 317–histidine 351, and aspartate 354–proline 388.

This sequence belongs to the CCM1 family. As to quaternary structure, binds to mitochondrial small subunit 15S rRNA.

It is found in the mitochondrion. In terms of biological role, regulates mitochondrial small subunit maturation by controlling 15S rRNA 5'-end processing. Localizes to the 5' precursor of the 15S rRNA in a position that is subsequently occupied by mS47 in the mature yeast mtSSU. Uses structure and sequence-specific RNA recognition, binding to a single-stranded region of the precursor and specifically recognizing bases -6 to -1. The exchange of Ccm1 for mS47 is coupled to the irreversible removal of precursor rRNA that is accompanied by conformational changes of the mitoribosomal proteins uS5m and mS26. These conformational changes signal completion of 5'-end rRNA processing through protection of the mature 5'-end of the 15S rRNA and stabilization of mS47. The removal of the 5' precursor together with the dissociation of Ccm1 may be catalyzed by the 5'-3' exoribonuclease Pet127. Involved in the specific removal of group I introns in mitochondrial encoded transcripts. The protein is Mitochondrial 15S rRNA processing factor CCM1 (CCM1) of Eremothecium gossypii (strain ATCC 10895 / CBS 109.51 / FGSC 9923 / NRRL Y-1056) (Yeast).